We begin with the raw amino-acid sequence, 232 residues long: Phosphatidylserine decarboxylase proenzyme (232 aa).

Catalysis depends on S190, which acts as the Schiff-base intermediate with substrate; via pyruvic acid. S190 bears the Pyruvic acid (Ser); by autocatalysis mark.

Belongs to the phosphatidylserine decarboxylase family. PSD-A subfamily. As to quaternary structure, heterodimer of a large membrane-associated beta subunit and a small pyruvoyl-containing alpha subunit. Pyruvate serves as cofactor. Is synthesized initially as an inactive proenzyme. Formation of the active enzyme involves a self-maturation process in which the active site pyruvoyl group is generated from an internal serine residue via an autocatalytic post-translational modification. Two non-identical subunits are generated from the proenzyme in this reaction, and the pyruvate is formed at the N-terminus of the alpha chain, which is derived from the carboxyl end of the proenzyme. The post-translation cleavage follows an unusual pathway, termed non-hydrolytic serinolysis, in which the side chain hydroxyl group of the serine supplies its oxygen atom to form the C-terminus of the beta chain, while the remainder of the serine residue undergoes an oxidative deamination to produce ammonia and the pyruvoyl prosthetic group on the alpha chain.

It is found in the cell membrane. The catalysed reaction is a 1,2-diacyl-sn-glycero-3-phospho-L-serine + H(+) = a 1,2-diacyl-sn-glycero-3-phosphoethanolamine + CO2. It participates in phospholipid metabolism; phosphatidylethanolamine biosynthesis; phosphatidylethanolamine from CDP-diacylglycerol: step 2/2. Functionally, catalyzes the formation of phosphatidylethanolamine (PtdEtn) from phosphatidylserine (PtdSer). This Bradyrhizobium sp. (strain ORS 278) protein is Phosphatidylserine decarboxylase proenzyme.